The following is a 217-amino-acid chain: Probable transaldolase (217 aa).

The active-site Schiff-base intermediate with substrate is lysine 83.

It belongs to the transaldolase family. Type 3B subfamily.

The protein localises to the cytoplasm. It carries out the reaction D-sedoheptulose 7-phosphate + D-glyceraldehyde 3-phosphate = D-erythrose 4-phosphate + beta-D-fructose 6-phosphate. It participates in carbohydrate degradation; pentose phosphate pathway; D-glyceraldehyde 3-phosphate and beta-D-fructose 6-phosphate from D-ribose 5-phosphate and D-xylulose 5-phosphate (non-oxidative stage): step 2/3. Functionally, transaldolase is important for the balance of metabolites in the pentose-phosphate pathway. This Methanocaldococcus jannaschii (strain ATCC 43067 / DSM 2661 / JAL-1 / JCM 10045 / NBRC 100440) (Methanococcus jannaschii) protein is Probable transaldolase (tal).